A 394-amino-acid polypeptide reads, in one-letter code: Chorismate synthase (394 aa).

Positions 42 and 48 each coordinate NADP(+). FMN is bound by residues 137–139, 258–259, Gly302, 317–321, and Arg343; these read RAS, QA, and KPIAT.

Belongs to the chorismate synthase family. As to quaternary structure, homotetramer. It depends on FMNH2 as a cofactor.

It carries out the reaction 5-O-(1-carboxyvinyl)-3-phosphoshikimate = chorismate + phosphate. It participates in metabolic intermediate biosynthesis; chorismate biosynthesis; chorismate from D-erythrose 4-phosphate and phosphoenolpyruvate: step 7/7. Catalyzes the anti-1,4-elimination of the C-3 phosphate and the C-6 proR hydrogen from 5-enolpyruvylshikimate-3-phosphate (EPSP) to yield chorismate, which is the branch point compound that serves as the starting substrate for the three terminal pathways of aromatic amino acid biosynthesis. This reaction introduces a second double bond into the aromatic ring system. The chain is Chorismate synthase from Streptomyces avermitilis (strain ATCC 31267 / DSM 46492 / JCM 5070 / NBRC 14893 / NCIMB 12804 / NRRL 8165 / MA-4680).